Here is a 160-residue protein sequence, read N- to C-terminus: MMIIVSSIIAVLMAVAVMVVRIKSSDKPVSPKKIILPPIFMSTGALMFLFPVFWVTGAEFLEAFTLGVIFSIFLIKTSKFEIKNNEIYMKRSKAFVFILVGLLVIRIVMKSILSTSIDYGALSGMFWILAFGMIVPWRIAMYLSYRKLHNELQSSNIQMN.

The next 5 helical transmembrane spans lie at 2–22 (MIIVSSIIAVLMAVAVMVVRI), 34–54 (IILPPIFMSTGALMFLFPVFW), 55–75 (VTGAEFLEAFTLGVIFSIFLI), 94–114 (AFVFILVGLLVIRIVMKSILS), and 117–137 (IDYGALSGMFWILAFGMIVPW).

It localises to the cell membrane. This chain is Protein CcdC (ccdC), found in Bacillus subtilis (strain 168).